Reading from the N-terminus, the 708-residue chain is Leukotoxin translocation ATP-binding protein LktB (708 aa).

Positions 1 to 126 (MEVNHQSNDL…SCYQGKIILV (126 aa)) constitute a Peptidase C39 domain. Residues 155-437 (FLETLLVSIF…LAQLWQDFTQ (283 aa)) form the ABC transmembrane type-1 domain. 5 helical membrane-spanning segments follow: residues 159-179 (LLVS…FQVV), 192-212 (LNII…LSGL), 270-290 (ALTS…MWYY), 296-316 (LVIL…SPIL), and 389-409 (VMVI…LSIG). One can recognise an ABC transporter domain in the interval 469 to 704 (IAFKNIRFRY…NNGLYSYLHQ (236 aa)). 503 to 510 (GRSGSGKS) is an ATP binding site.

This sequence belongs to the ABC transporter superfamily. Protein-1 exporter (TC 3.A.1.109) family. As to quaternary structure, homodimer.

Its subcellular location is the cell inner membrane. The enzyme catalyses ATP + H2O + proteinSide 1 = ADP + phosphate + proteinSide 2.. Part of the ABC transporter complex LktBD involved in leukotoxin export. Transmembrane domains (TMD) form a pore in the inner membrane and the ATP-binding domain (NBD) is responsible for energy generation. The protein is Leukotoxin translocation ATP-binding protein LktB (lktB) of Pasteurella haemolytica-like sp. (strain 5943B).